We begin with the raw amino-acid sequence, 137 residues long: Large ribosomal subunit protein uL16 (137 aa).

It belongs to the universal ribosomal protein uL16 family. Part of the 50S ribosomal subunit.

Functionally, binds 23S rRNA and is also seen to make contacts with the A and possibly P site tRNAs. The polypeptide is Large ribosomal subunit protein uL16 (Baumannia cicadellinicola subsp. Homalodisca coagulata).